A 327-amino-acid chain; its full sequence is Complex I intermediate-associated protein 30, mitochondrial (327 aa).

The transit peptide at 1–24 directs the protein to the mitochondrion; it reads MALVHKLLRGTYFLRKFSKPTSAL. The segment at 42-63 is disordered; sequence PVASPGKASSQRKTEGDLQGDH. Residues 53–63 show a composition bias toward basic and acidic residues; sequence RKTEGDLQGDH. A Phosphoserine modification is found at serine 318.

The protein belongs to the CIA30 family. As to quaternary structure, part of the mitochondrial complex I assembly/MCIA complex that comprises at least the core subunits TMEM126B, NDUFAF1, ECSIT and ACAD9 and complement subunits such as COA1 and TMEM186. Interacts with ECSIT. Interacts with ACAD9. At early stages of complex I assembly, it is found in intermediate subcomplexes that contain different subunits including NDUFB6, NDUFA6, NDUFA9, NDUFS3, NDUFS7, ND1, ND2 and ND3. Interacts with TMEM70 and TMEM242. In terms of tissue distribution, ubiquitous.

The protein localises to the mitochondrion. It is found in the mitochondrion matrix. Its function is as follows. As part of the MCIA complex, involved in the assembly of the mitochondrial complex I. The chain is Complex I intermediate-associated protein 30, mitochondrial from Homo sapiens (Human).